A 308-amino-acid chain; its full sequence is Sulfate adenylyltransferase subunit 2 (308 aa).

It belongs to the PAPS reductase family. CysD subfamily. As to quaternary structure, heterodimer composed of CysD, the smaller subunit, and CysN.

The enzyme catalyses sulfate + ATP + H(+) = adenosine 5'-phosphosulfate + diphosphate. It participates in sulfur metabolism; hydrogen sulfide biosynthesis; sulfite from sulfate: step 1/3. Its function is as follows. With CysN forms the ATP sulfurylase (ATPS) that catalyzes the adenylation of sulfate producing adenosine 5'-phosphosulfate (APS) and diphosphate, the first enzymatic step in sulfur assimilation pathway. APS synthesis involves the formation of a high-energy phosphoric-sulfuric acid anhydride bond driven by GTP hydrolysis by CysN coupled to ATP hydrolysis by CysD. In Chromobacterium violaceum (strain ATCC 12472 / DSM 30191 / JCM 1249 / CCUG 213 / NBRC 12614 / NCIMB 9131 / NCTC 9757 / MK), this protein is Sulfate adenylyltransferase subunit 2.